We begin with the raw amino-acid sequence, 272 residues long: uncharacterized protein (272 aa).

A signal peptide spans Met1 to Leu20.

This is an uncharacterized protein from Caenorhabditis elegans.